The primary structure comprises 284 residues: 2-dehydro-3-deoxyphosphooctonate aldolase (284 aa).

The protein belongs to the KdsA family.

Its subcellular location is the cytoplasm. It carries out the reaction D-arabinose 5-phosphate + phosphoenolpyruvate + H2O = 3-deoxy-alpha-D-manno-2-octulosonate-8-phosphate + phosphate. The protein operates within carbohydrate biosynthesis; 3-deoxy-D-manno-octulosonate biosynthesis; 3-deoxy-D-manno-octulosonate from D-ribulose 5-phosphate: step 2/3. It functions in the pathway bacterial outer membrane biogenesis; lipopolysaccharide biosynthesis. The polypeptide is 2-dehydro-3-deoxyphosphooctonate aldolase (Salmonella arizonae (strain ATCC BAA-731 / CDC346-86 / RSK2980)).